The chain runs to 245 residues: 1-(5-phosphoribosyl)-5-[(5-phosphoribosylamino)methylideneamino] imidazole-4-carboxamide isomerase (245 aa).

Asp7 serves as the catalytic Proton acceptor. Residue Asp129 is the Proton donor of the active site.

The protein belongs to the HisA/HisF family.

The protein resides in the cytoplasm. It catalyses the reaction 1-(5-phospho-beta-D-ribosyl)-5-[(5-phospho-beta-D-ribosylamino)methylideneamino]imidazole-4-carboxamide = 5-[(5-phospho-1-deoxy-D-ribulos-1-ylimino)methylamino]-1-(5-phospho-beta-D-ribosyl)imidazole-4-carboxamide. It participates in amino-acid biosynthesis; L-histidine biosynthesis; L-histidine from 5-phospho-alpha-D-ribose 1-diphosphate: step 4/9. The polypeptide is 1-(5-phosphoribosyl)-5-[(5-phosphoribosylamino)methylideneamino] imidazole-4-carboxamide isomerase (Escherichia fergusonii (strain ATCC 35469 / DSM 13698 / CCUG 18766 / IAM 14443 / JCM 21226 / LMG 7866 / NBRC 102419 / NCTC 12128 / CDC 0568-73)).